The chain runs to 218 residues: Cytochrome b6 (218 aa).

The chain crosses the membrane as a helical span at residues 35–55 (IFYCLGGITLVCFLVQFATGF). Cysteine 38 is a binding site for heme c. 2 residues coordinate heme b: histidine 89 and histidine 103. Transmembrane regions (helical) follow at residues 93 to 113 (ASMM…TGGF), 119 to 139 (LTWV…VTGY), and 189 to 209 (LHTF…FLMI). Residues histidine 190 and histidine 205 each coordinate heme b.

It belongs to the cytochrome b family. PetB subfamily. The 4 large subunits of the cytochrome b6-f complex are cytochrome b6, subunit IV (17 kDa polypeptide, PetD), cytochrome f and the Rieske protein, while the 4 small subunits are PetG, PetL, PetM and PetN. The complex functions as a dimer. The cofactor is heme b. Heme c is required as a cofactor.

It localises to the cellular thylakoid membrane. Functionally, component of the cytochrome b6-f complex, which mediates electron transfer between photosystem II (PSII) and photosystem I (PSI), cyclic electron flow around PSI, and state transitions. This is Cytochrome b6 from Prochlorococcus marinus (strain MIT 9303).